The sequence spans 184 residues: Ribosome-recycling factor (184 aa).

The protein belongs to the RRF family.

Its subcellular location is the cytoplasm. In terms of biological role, responsible for the release of ribosomes from messenger RNA at the termination of protein biosynthesis. May increase the efficiency of translation by recycling ribosomes from one round of translation to another. This is Ribosome-recycling factor from Lachnoclostridium phytofermentans (strain ATCC 700394 / DSM 18823 / ISDg) (Clostridium phytofermentans).